Consider the following 2104-residue polypeptide: Protein Ycf2 (2104 aa).

1396–1403 is a binding site for ATP; that stretch reads GPVETGRS.

It belongs to the Ycf2 family.

It localises to the plastid. It is found in the chloroplast stroma. In terms of biological role, probable ATPase of unknown function. Its presence in a non-photosynthetic plant (Epifagus virginiana) and experiments in tobacco indicate that it has an essential function which is probably not related to photosynthesis. This chain is Protein Ycf2 (ycf2-A), found in Adiantum capillus-veneris (Maidenhair fern).